We begin with the raw amino-acid sequence, 306 residues long: MASPGCLWLLAVALLPWTCASRALQHLDPPAPLPLVIWHGMGDSCCNPLSMGAIKKMVEKKIPGIYVLSLEIGKTLMEDVENSFFLNVNSQVTTVCQALAKDPKLQQGYNAMGFSQGGQFLRAVAQRCPSPPMINLISVGGQHQGVFGLPRCPGESSHICDFIRKTLNAGAYSKVVQERLVQAEYWHDPIKEDVYRNHSIFLADINQERGINESYKKNLMALKKFVMVKFLNDSIVDPVDSEWFGFYRSGQAKETIPLQETSLYTQDRLGLKEMDNAGQLVFLATEGDHLQLSEEWFYAHIIPFLG.

Positions 1-27 (MASPGCLWLLAVALLPWTCASRALQHL) are cleaved as a signal peptide. Cysteine 6 is lipidated: S-palmitoyl cysteine; by ZDHHC3 and ZDHHC7. Disulfide bonds link cysteine 45-cysteine 46, cysteine 96-cysteine 128, and cysteine 152-cysteine 160. Serine 115 is a catalytic residue. 3 N-linked (GlcNAc...) asparagine glycosylation sites follow: asparagine 197, asparagine 212, and asparagine 232. Catalysis depends on residues aspartate 233 and histidine 289.

This sequence belongs to the palmitoyl-protein thioesterase family. As to quaternary structure, interacts with CLN5. Interacts with ATP5F1A and ATP5F1B. Post-translationally, glycosylated.

The protein localises to the lysosome. The protein resides in the secreted. It is found in the golgi apparatus. Its subcellular location is the endoplasmic reticulum. The enzyme catalyses S-hexadecanoyl-L-cysteinyl-[protein] + H2O = L-cysteinyl-[protein] + hexadecanoate + H(+). It carries out the reaction hexadecanoyl-CoA + H2O = hexadecanoate + CoA + H(+). It catalyses the reaction S-hexadecanoyl-N-acetylcysteamine + H2O = N-acetylcysteamine + hexadecanoate + H(+). The catalysed reaction is S-hexadecanoyl-N-acetylcysteine methyl ester + H2O = N-acetylcysteine methyl ester + hexadecanoate + H(+). With respect to regulation, palmitoylation reduces PPT1 enzymatic activity. Has thioesterase activity against fatty acid thioesters with 14 -18 carbons, including palmitoyl-CoA, S-palmitoyl-N-acetylcysteamine, and palmitoylated proteins. In contrast to PPT2, PPT1 can hydrolyze palmitoylated proteins and palmitoylcysteine. This chain is Palmitoyl-protein thioesterase 1 (PPT1), found in Homo sapiens (Human).